The primary structure comprises 266 residues: Small ribosomal subunit protein uS2 (266 aa).

The protein belongs to the universal ribosomal protein uS2 family.

The chain is Small ribosomal subunit protein uS2 from Bartonella tribocorum (strain CIP 105476 / IBS 506).